A 102-amino-acid polypeptide reads, in one-letter code: Protein YcgL (102 aa).

One can recognise a YcgL domain in the interval 14–98 (MFCVIYRSSK…PPEDLLKQHL (85 aa)).

This chain is Protein YcgL, found in Salmonella agona (strain SL483).